The primary structure comprises 152 residues: Superoxide dismutase [Cu-Zn] (152 aa).

Cu cation is bound by residues histidine 45, histidine 47, and histidine 62. A disulfide bond links cysteine 56 and cysteine 145. Residues histidine 62, histidine 70, histidine 79, and aspartate 82 each coordinate Zn(2+). Histidine 119 is a binding site for Cu cation.

Belongs to the Cu-Zn superoxide dismutase family. As to quaternary structure, homodimer. Cu cation is required as a cofactor. The cofactor is Zn(2+).

The protein resides in the cytoplasm. The catalysed reaction is 2 superoxide + 2 H(+) = H2O2 + O2. In terms of biological role, destroys radicals which are normally produced within the cells and which are toxic to biological systems. This is Superoxide dismutase [Cu-Zn] (SODCC) from Spinacia oleracea (Spinach).